The chain runs to 247 residues: MASSDKVPVACPASSGDGKEPMGNPTKTTTAMLEKGTAMMQSMKPIRQMSLHVCSFACYSHDPGRQIEVHIYGHRVNQDFLQCAVYDSNSSKAHLIGIEYIVSEKLFESLSPEEQKLWHSHDYEIQMALLVTPRVPELVAKPELKNLAKSYGKFWCTWQIDRGDKLPLGVPSLMVSPQDVNLGRIKPELVKKRDEEHGISTESLKPSRDGICGPEKKNLVADYWVRFRKGFALDVVETDMKRTAPFP.

The disordered stretch occupies residues 1 to 28 (MASSDKVPVACPASSGDGKEPMGNPTKT).

Belongs to the OBAP family.

The sequence is that of Oil body-associated protein 2B from Arabidopsis thaliana (Mouse-ear cress).